The sequence spans 630 residues: ATP-dependent zinc metalloprotease FtsH 2 (630 aa).

The Cytoplasmic segment spans residues 1-8 (MNNNPNRR). Residues 9–29 (GSLIGPLFIYFILAMLIFMSI) form a helical membrane-spanning segment. Residues 30 to 110 (SQLNTSNITE…YIQNTGASWW (81 aa)) are Periplasmic-facing. The helical transmembrane segment at 111–131 (VTMLIYMLPLIILMFFWFWMF) threads the bilayer. Over 132-630 (RRSGTGEGIP…KETNLFVSYA (499 aa)) the chain is Cytoplasmic. ATP is bound at residue 203 to 210 (GPPGTGKT). His425 is a binding site for Zn(2+). The active site involves Glu426. 2 residues coordinate Zn(2+): His429 and Asp502.

This sequence in the central section; belongs to the AAA ATPase family. It in the C-terminal section; belongs to the peptidase M41 family. As to quaternary structure, homohexamer. Zn(2+) is required as a cofactor.

It is found in the cell inner membrane. Its function is as follows. Acts as a processive, ATP-dependent zinc metallopeptidase for both cytoplasmic and membrane proteins. Plays a role in the quality control of integral membrane proteins. The sequence is that of ATP-dependent zinc metalloprotease FtsH 2 from Petrotoga mobilis (strain DSM 10674 / SJ95).